Here is a 1377-residue protein sequence, read N- to C-terminus: DNA-directed RNA polymerase subunit beta (1377 aa).

Belongs to the RNA polymerase beta chain family. In terms of assembly, the RNAP catalytic core consists of 2 alpha, 1 beta, 1 beta' and 1 omega subunit. When a sigma factor is associated with the core the holoenzyme is formed, which can initiate transcription.

It catalyses the reaction RNA(n) + a ribonucleoside 5'-triphosphate = RNA(n+1) + diphosphate. In terms of biological role, DNA-dependent RNA polymerase catalyzes the transcription of DNA into RNA using the four ribonucleoside triphosphates as substrates. The protein is DNA-directed RNA polymerase subunit beta of Cereibacter sphaeroides (strain ATCC 17029 / ATH 2.4.9) (Rhodobacter sphaeroides).